The primary structure comprises 356 residues: Cytochrome c oxidase subunit 2 (356 aa).

The first 23 residues, 1–23, serve as a signal peptide directing secretion; it reads MNKGLCNWRLFSLFGMMALLLAG. The segment at 24-259 is cytochrome c oxidase subunit II; that stretch reads CGKPFLSTLQ…QNAKKPVVTD (236 aa). The next 2 helical transmembrane spans lie at 45–65 and 93–113; these read LMLLSTSIMVLVIVVVAIIFV and IIWTVIPIILLLILAVPTVLT. Cu cation-binding residues include His-178, Cys-219, Cys-223, and His-227. Residues 260 to 356 form the Cytochrome c domain; it reads PVAKEGEAIF…TKYLMSLKVE (97 aa). Residues Cys-273, Cys-276, His-277, and Met-331 each coordinate heme c.

It belongs to the cytochrome c oxidase subunit 2 family. The cofactor is Cu cation. It depends on heme c as a cofactor.

It localises to the cell membrane. The catalysed reaction is 4 Fe(II)-[cytochrome c] + O2 + 8 H(+)(in) = 4 Fe(III)-[cytochrome c] + 2 H2O + 4 H(+)(out). Functionally, subunits I and II form the functional core of the enzyme complex. Electrons originating in cytochrome c are transferred via heme a and Cu(A) to the binuclear center formed by heme a3 and Cu(B). The polypeptide is Cytochrome c oxidase subunit 2 (ctaC) (Bacillus sp. (strain PS3)).